The sequence spans 554 residues: Probable urocanate hydratase (554 aa).

Residues 49–50 (GG), Gln-127, Glu-194, 240–241 (NA), 261–265 (QTAAH), 271–272 (YI), and Tyr-320 each bind NAD(+). Cys-408 is an active-site residue. Residue Gly-490 coordinates NAD(+).

This sequence belongs to the urocanase family. Requires NAD(+) as cofactor.

The protein resides in the cytoplasm. The catalysed reaction is 4-imidazolone-5-propanoate = trans-urocanate + H2O. The protein operates within amino-acid degradation; L-histidine degradation into L-glutamate; N-formimidoyl-L-glutamate from L-histidine: step 2/3. In terms of biological role, catalyzes the conversion of urocanate to 4-imidazolone-5-propionate. The protein is Probable urocanate hydratase of Thermoplasma acidophilum (strain ATCC 25905 / DSM 1728 / JCM 9062 / NBRC 15155 / AMRC-C165).